The following is a 572-amino-acid chain: DnaJ protein ERDJ3A (572 aa).

The signal sequence occupies residues 1–23 (MVRTRLAISVVLVSTLLLLNVKA). Residues 27–91 (DPYKVLGVSK…EKRKNYDLYG (65 aa)) form the J domain. Residues 394–423 (ITVKNLKSAVQELGKLLEGLEKKNKKVSSK) adopt a coiled-coil conformation. Positions 419–439 (KVSSKSQAGQAPNESSEKIPL) are disordered. The segment covering 422 to 432 (SKSQAGQAPNE) has biased composition (polar residues). Asn431 carries N-linked (GlcNAc...) asparagine glycosylation.

Interacts with BIP1 and BIP3. The interaction with BIP1 and BIP3 activates the ATPase enzyme activities of BIP1 and BIP3. Not N-glycosylated. As to expression, expressed in roots, leaves, stems, flowers, mature pollen grains and growing pollen tubes.

Its subcellular location is the endoplasmic reticulum lumen. In terms of biological role, regulates protein folding in the endoplasmic reticulum (ER) lumen. Functions probably as a co-molecular chaperone that is required for normal growth of pollen tubes under high-temperature stress. The chain is DnaJ protein ERDJ3A (ERDJ3A) from Arabidopsis thaliana (Mouse-ear cress).